A 445-amino-acid chain; its full sequence is tRNA-2-methylthio-N(6)-dimethylallyladenosine synthase (445 aa).

An MTTase N-terminal domain is found at 2 to 122 (KKAFVKSYGC…LPDLLARSRE (121 aa)). [4Fe-4S] cluster-binding residues include Cys11, Cys47, Cys85, Cys157, Cys161, and Cys164. Residues 143–378 (RTLGASAFLT…LDSQRHAYQR (236 aa)) enclose the Radical SAM core domain. One can recognise a TRAM domain in the interval 378 to 440 (RAAAGRVFDV…SNSLFGELVS (63 aa)).

The protein belongs to the methylthiotransferase family. MiaB subfamily. Monomer. It depends on [4Fe-4S] cluster as a cofactor.

It localises to the cytoplasm. The enzyme catalyses N(6)-dimethylallyladenosine(37) in tRNA + (sulfur carrier)-SH + AH2 + 2 S-adenosyl-L-methionine = 2-methylsulfanyl-N(6)-dimethylallyladenosine(37) in tRNA + (sulfur carrier)-H + 5'-deoxyadenosine + L-methionine + A + S-adenosyl-L-homocysteine + 2 H(+). In terms of biological role, catalyzes the methylthiolation of N6-(dimethylallyl)adenosine (i(6)A), leading to the formation of 2-methylthio-N6-(dimethylallyl)adenosine (ms(2)i(6)A) at position 37 in tRNAs that read codons beginning with uridine. This chain is tRNA-2-methylthio-N(6)-dimethylallyladenosine synthase, found in Methylobacterium radiotolerans (strain ATCC 27329 / DSM 1819 / JCM 2831 / NBRC 15690 / NCIMB 10815 / 0-1).